Reading from the N-terminus, the 495-residue chain is Glutamyl-tRNA(Gln) amidotransferase subunit A (495 aa).

Residues K75 and S150 each act as charge relay system in the active site. The active-site Acyl-ester intermediate is S174.

The protein belongs to the amidase family. GatA subfamily. As to quaternary structure, heterotrimer of A, B and C subunits.

It catalyses the reaction L-glutamyl-tRNA(Gln) + L-glutamine + ATP + H2O = L-glutaminyl-tRNA(Gln) + L-glutamate + ADP + phosphate + H(+). Functionally, allows the formation of correctly charged Gln-tRNA(Gln) through the transamidation of misacylated Glu-tRNA(Gln) in organisms which lack glutaminyl-tRNA synthetase. The reaction takes place in the presence of glutamine and ATP through an activated gamma-phospho-Glu-tRNA(Gln). This Paraburkholderia xenovorans (strain LB400) protein is Glutamyl-tRNA(Gln) amidotransferase subunit A.